A 189-amino-acid polypeptide reads, in one-letter code: GTP cyclohydrolase 1 (189 aa).

Residues Cys78, His81, and Cys150 each contribute to the Zn(2+) site.

It belongs to the GTP cyclohydrolase I family. In terms of assembly, toroid-shaped homodecamer, composed of two pentamers of five dimers.

The enzyme catalyses GTP + H2O = 7,8-dihydroneopterin 3'-triphosphate + formate + H(+). The protein operates within cofactor biosynthesis; 7,8-dihydroneopterin triphosphate biosynthesis; 7,8-dihydroneopterin triphosphate from GTP: step 1/1. The chain is GTP cyclohydrolase 1 from Listeria innocua serovar 6a (strain ATCC BAA-680 / CLIP 11262).